The primary structure comprises 88 residues: UPF0335 protein WD_0557 (88 aa).

The protein belongs to the UPF0335 family.

The sequence is that of UPF0335 protein WD_0557 from Wolbachia pipientis wMel.